The following is a 395-amino-acid chain: NAD(P)H-quinone oxidoreductase subunit H, chloroplastic (395 aa).

This sequence belongs to the complex I 49 kDa subunit family. As to quaternary structure, NDH is composed of at least 16 different subunits, 5 of which are encoded in the nucleus.

It is found in the plastid. Its subcellular location is the chloroplast thylakoid membrane. The catalysed reaction is a plastoquinone + NADH + (n+1) H(+)(in) = a plastoquinol + NAD(+) + n H(+)(out). It catalyses the reaction a plastoquinone + NADPH + (n+1) H(+)(in) = a plastoquinol + NADP(+) + n H(+)(out). Functionally, NDH shuttles electrons from NAD(P)H:plastoquinone, via FMN and iron-sulfur (Fe-S) centers, to quinones in the photosynthetic chain and possibly in a chloroplast respiratory chain. The immediate electron acceptor for the enzyme in this species is believed to be plastoquinone. Couples the redox reaction to proton translocation, and thus conserves the redox energy in a proton gradient. The protein is NAD(P)H-quinone oxidoreductase subunit H, chloroplastic of Staurastrum punctulatum (Green alga).